The sequence spans 251 residues: Mast cell protease 3 (251 aa).

Residues 1-17 form the signal peptide; that stretch reads MVLFLLLVALLSPAGEA. The propeptide at 18–19 is activation peptide; sequence GK. The 224-residue stretch at 20–243 folds into the Peptidase S1 domain; that stretch reads IIGGHEAKPH…FLSWIQRTMR (224 aa). C48 and C64 are disulfide-bonded. The active-site Charge relay system is H63. N70 is a glycosylation site (N-linked (GlcNAc...) asparagine). The active-site Charge relay system is D107. Disulfide bonds link C141/C207 and C172/C186. The active-site Charge relay system is S201.

Belongs to the peptidase S1 family. Granzyme subfamily.

Its subcellular location is the secreted. The protein resides in the cytoplasmic granule. The polypeptide is Mast cell protease 3 (Ovis aries (Sheep)).